Here is a 1188-residue protein sequence, read N- to C-terminus: Probable RNA helicase armi (1188 aa).

An ATP-binding site is contributed by 723–730 (GPPGSGKT). A DEAG box motif is present at residues 862–865 (DEAG).

It belongs to the DNA2/NAM7 helicase family. SDE3 subfamily. In terms of assembly, forms a complex with piwi and fs(1)Yb; this interaction is required for proper piRNA loading and nuclear localization of piwi. The interaction of piwi and fs(1)Yb is likely to occur via armi. As to expression, abundant in oocytes and syncytial blastoderm. Expressed at low level throughout development, including somatic tissues. First apparent early in oogenesis, in the cytoplasm of stem cells and mitotically dividing cystoblasts. In regions 2a and 2b of the germarium, it is most concentrated in the center of the germline cysts, where the pro-oocyte is located. In stage 1 and early stage 2 egg chambers, it accumulates at the anterior of the oocyte, near the ring canals. It also extends through the ring canals forming a branched structure that links the early oocyte with adjacent nurse cells. In stage 3 cysts, it accumulates at the posterior cortex and localizes to extensions that pass through the oocyte into the nurse cells. Through stages 4 to 7, it continues to be somewhat enriched at the posterior cortex of the oocyte, but at significantly lower level. In stage 9 to 10 egg chambers, it is found throughout the cytoplasm of the oocyte and nurse cells, with slight enrichment at the oocyte cortex.

It is found in the cytoplasm. It carries out the reaction ATP + H2O = ADP + phosphate + H(+). Probable RNA helicase required for axial polarization of the oocyte during early and mid oogenesis. Plays a central role in RNA interference (RNAi) process, a process that mediates mRNA destruction of translational repression. Required for the assembly of the RISC complex, a complex required for target RNA destruction or repression. May be required in the RISC assembly to unwind miRNAs, in the production of single-stranded miRNA from the double-stranded miRNA, a key step in RISC formation. Required both for the translational control of oskar (osk) mRNA and cytoskeletal polarization in the oocyte. Required for somatic primary piRNA biogenesis. Involved in repression of long interspersed nuclear elements (LINEs) including HeT-A, I-element and TART LINEs. The sequence is that of Probable RNA helicase armi from Drosophila melanogaster (Fruit fly).